A 221-amino-acid chain; its full sequence is Leucine rich adaptor protein 1-like (221 aa).

Met1 carries the N-acetylmethionine modification. A disordered region spans residues 24–81 (LARSLRGEELAPREGAADPSGVGGSCSSSSSCSSFAPSVSSSSSSSPASGSPRRSHPS). Basic and acidic residues predominate over residues 28–39 (LRGEELAPREGA). Over residues 48-75 (SCSSSSSCSSFAPSVSSSSSSSPASGSP) the composition is skewed to low complexity.

The protein is Leucine rich adaptor protein 1-like (Lurap1l) of Mus musculus (Mouse).